The sequence spans 501 residues: Lysine--tRNA ligase (501 aa).

Residues E404 and E411 each coordinate Mg(2+).

This sequence belongs to the class-II aminoacyl-tRNA synthetase family. In terms of assembly, homodimer. It depends on Mg(2+) as a cofactor.

The protein localises to the cytoplasm. The catalysed reaction is tRNA(Lys) + L-lysine + ATP = L-lysyl-tRNA(Lys) + AMP + diphosphate. The polypeptide is Lysine--tRNA ligase (Campylobacter jejuni subsp. jejuni serotype O:6 (strain 81116 / NCTC 11828)).